We begin with the raw amino-acid sequence, 83 residues long: Lipolysis-activating peptide 1-alpha chain (83 aa).

The signal sequence occupies residues 1 to 21; the sequence is MNIILFYFMPILISLPGLLAS. An LCN-type CS-alpha/beta domain is found at 22-83; sequence GTYPNDVYGL…LFWDVYKEHC (62 aa). 3 disulfide bridges follow: Cys35–Cys58, Cys44–Cys63, and Cys48–Cys65.

It belongs to the long (3 C-C) scorpion toxin superfamily. Monomer (edited version) and heterodimer (non-edited version) of this alpha chain and a beta chain (AC P0CI43). In terms of tissue distribution, expressed by the venom gland.

It is found in the secreted. Its function is as follows. The heterodimer non-edited LVP1 induces lipolysis in rat adipocytes. Induction of lipolysis by LVP1 appears to be mediated through the beta-2 adrenergic receptor pathway (ADRB2). Functionally, the edited BmKBTx-like, similar to beta-toxins, may modulate voltage-gated sodium channels (Nav) and may block voltage-gated potassium channels (Kv). The sequence is that of Lipolysis-activating peptide 1-alpha chain from Lychas mucronatus (Chinese swimming scorpion).